Here is a 129-residue protein sequence, read N- to C-terminus: MSINHPLSVLLVGAGGFLGTVARYLVALAFSPASPGFPFATFSVNIAGSFLIGFLSELAVSTTIVSPEARLFLVTGFCGGFTTFSSYMFEGATLARDGELFYFSLYLAGSIVGGFVALYTGIIAAKPWS.

4 helical membrane passes run 10 to 30 (LLVG…ALAF), 35 to 55 (PGFP…IGFL), 71 to 91 (LFLV…MFEG), and 105 to 125 (LYLA…IIAA). Residues Gly-79 and Thr-82 each contribute to the Na(+) site.

It belongs to the fluoride channel Fluc/FEX (TC 1.A.43) family.

It localises to the cell inner membrane. It carries out the reaction fluoride(in) = fluoride(out). Na(+) is not transported, but it plays an essential structural role and its presence is essential for fluoride channel function. Its function is as follows. Fluoride-specific ion channel. Important for reducing fluoride concentration in the cell, thus reducing its toxicity. The protein is Fluoride-specific ion channel FluC of Chlorobium luteolum (strain DSM 273 / BCRC 81028 / 2530) (Pelodictyon luteolum).